Consider the following 267-residue polypeptide: 2-keto-3-deoxy-L-rhamnonate aldolase (267 aa).

Histidine 49 serves as the catalytic Proton acceptor. Glutamine 151 contributes to the substrate binding site. Glutamate 153 serves as a coordination point for Mg(2+). The substrate site is built by alanine 178 and aspartate 179. Aspartate 179 lines the Mg(2+) pocket.

The protein belongs to the HpcH/HpaI aldolase family. KDR aldolase subfamily. Homohexamer. Requires Mg(2+) as cofactor.

It catalyses the reaction 2-dehydro-3-deoxy-L-rhamnonate = (S)-lactaldehyde + pyruvate. Catalyzes the reversible retro-aldol cleavage of 2-keto-3-deoxy-L-rhamnonate (KDR) to pyruvate and lactaldehyde. This chain is 2-keto-3-deoxy-L-rhamnonate aldolase, found in Salmonella enteritidis PT4 (strain P125109).